The primary structure comprises 112 residues: Putative pterin-4-alpha-carbinolamine dehydratase (112 aa).

This sequence belongs to the pterin-4-alpha-carbinolamine dehydratase family.

The enzyme catalyses (4aS,6R)-4a-hydroxy-L-erythro-5,6,7,8-tetrahydrobiopterin = (6R)-L-erythro-6,7-dihydrobiopterin + H2O. The sequence is that of Putative pterin-4-alpha-carbinolamine dehydratase from Shewanella baltica (strain OS155 / ATCC BAA-1091).